The following is a 1891-amino-acid chain: Transcription initiation factor TFIID subunit 1 (1891 aa).

Disordered regions lie at residues 1–34 (MGPGWAGLLQDKGGGSPSVVMSDTDSDEESAGGG), 154–180 (KLMPPPPPPPGPLKKEKDQDDITGVSE), and 197–224 (ASEKVDFSSSSDSESEMGPQDAAQSESK). Positions 1–435 (MGPGWAGLLQ…VTQLHWEDDI (435 aa)) constitute a Protein kinase 1 domain. The segment covering 156 to 165 (MPPPPPPPGP) has biased composition (pro residues). The segment covering 197 to 208 (ASEKVDFSSSSD) has biased composition (low complexity). Phosphoserine; by autocatalysis is present on serine 328. The segment at 535–556 (PDEKEEATSNSPSKENKKESSL) is disordered. The interval 538–997 (KEEATSNSPS…KIPNKPTQQK (460 aa)) is histone acetyltransferase (HAT). N6-acetyllysine is present on lysine 565. Glycyl lysine isopeptide (Lys-Gly) (interchain with G-Cter in SUMO2) cross-links involve residues lysine 570 and lysine 583. Disordered stretches follow at residues 990-1009 (PNKPTQQKDDKEPQPVKKTV), 1128-1148 (MLQNKKTSSQLSREREEQERK), and 1254-1278 (RLKRNQEKEKLKGPPEKKPKKMKER). Composition is skewed to basic and acidic residues over residues 995–1004 (QQKDDKEPQP), 1139–1148 (SREREEQERK), and 1254–1270 (RLKRNQEKEKLKGPPEK). The segment at residues 1216–1294 (VRIRTTKDEE…CGACGAIGHM (79 aa)) is a DNA-binding region (HMG box). The tract at residues 1363 to 1650 (VLKFPKQQLP…TAKEAALEEA (288 aa)) is interaction with ASF1A and ASF1B. A Nuclear localization signal motif is present at residues 1372–1379 (PPKKKRRV). Bromo domains lie at 1397 to 1505 (RRRT…LKEK) and 1519 to 1628 (LLDD…LTEY). The region spanning 1446 to 1891 (MDLQTLRENV…AGDTDLDSDE (446 aa)) is the Protein kinase 2 domain. Disordered stretches follow at residues 1651–1676 (ELESLDPMTPGPYTPQPPDLYDNNTS) and 1690–1891 (SNLS…DSDE). Residues 1659-1668 (TPGPYTPQPP) are compositionally biased toward pro residues. Phosphoserine occurs at positions 1690 and 1693. A compositionally biased stretch (polar residues) spans 1690–1708 (SNLSVLDIPSATSEKQLTQ). Acidic residues-rich tracts occupy residues 1711 to 1723 (GDGDGDLADEEEG) and 1741 to 1756 (EGEDDEEDAGSDEEGD). Low complexity predominate over residues 1764–1778 (LSESGSDSDVESGSL). Phosphoserine is present on residues serine 1799, serine 1802, and serine 1820. Polar residues predominate over residues 1830-1840 (KSNTQDTSFSS). Residues 1846-1855 (VSEEEEDEEE) show a composition bias toward acidic residues. Residue serine 1847 is modified to Phosphoserine. The span at 1858–1867 (SGPSVLSQVH) shows a compositional bias: polar residues.

The protein belongs to the TAF1 family. Component of the TFIID basal transcription factor complex, composed of TATA-box-binding protein TBP, and a number of TBP-associated factors (TAFs). TFIID consists of at least TBP, TAF1, TAF2, TAF3, TAF4, TAF5, TAF6, TAF7, TAF8, TAF9, TAF10, TAF11, TAF12 and TAF13. Interacts with TAF7; the interaction is direct. TAF1, when part of the TFIID complex, interacts with C-terminus of TP53. Part of a TFIID-containing RNA polymerase II pre-initiation complex that is composed of TBP and at least GTF2A1, GTF2A2, GTF2E1, GTF2E2, GTF2F1, GTF2H2, GTF2H3, GTF2H4, GTF2H5, GTF2B, TCEA1, ERCC2, ERCC3, TAF1, TAF2, TAF3, TAF4, TAF5, TAF6, TAF7, TAF8, TAF9, TAF10, TAF11, TAF12 and TAF13. Component of some MLL1/MLL complex, at least composed of the core components KMT2A/MLL1, ASH2L, HCFC1/HCF1, WDR5 and RBBP5, as well as the facultative components BACC1, CHD8, E2F6, HSP70, INO80C, KANSL1, LAS1L, MAX, MCRS1, MGA, KAT8/MOF, PELP1, PHF20, PRP31, RING2, RUVB1/TIP49A, RUVB2/TIP49B, SENP3, TAF1, TAF4, TAF6, TAF7, TAF9 and TEX10. RB1 interacts with the N-terminal domain of TAF1. Interacts with ASF1A and ASF1B. Interacts (via bromo domains) with acetylated lysine residues on the N-terminus of histone H1.4, H2A, H2B, H3 and H4 (in vitro). Requires Mg(2+) as cofactor. In terms of processing, phosphorylated by casein kinase II in vitro.

The protein resides in the nucleus. It catalyses the reaction L-seryl-[protein] + ATP = O-phospho-L-seryl-[protein] + ADP + H(+). It carries out the reaction L-threonyl-[protein] + ATP = O-phospho-L-threonyl-[protein] + ADP + H(+). The enzyme catalyses L-lysyl-[protein] + acetyl-CoA = N(6)-acetyl-L-lysyl-[protein] + CoA + H(+). Autophosphorylates on Ser residues. Inhibited by retinoblastoma tumor suppressor protein, RB1. Binding to TAF1 or CIITA inhibits the histone acetyltransferase activity. The TFIID basal transcription factor complex plays a major role in the initiation of RNA polymerase II (Pol II)-dependent transcription. TFIID recognizes and binds promoters with or without a TATA box via its subunit TBP, a TATA-box-binding protein, and promotes assembly of the pre-initiation complex (PIC). The TFIID complex consists of TBP and TBP-associated factors (TAFs), including TAF1, TAF2, TAF3, TAF4, TAF5, TAF6, TAF7, TAF8, TAF9, TAF10, TAF11, TAF12 and TAF13. TAF1 is the largest component and core scaffold of the TFIID complex, involved in nucleating complex assembly. TAF1 forms a promoter DNA binding subcomplex of TFIID, together with TAF7 and TAF2. Contains novel N- and C-terminal Ser/Thr kinase domains which can autophosphorylate or transphosphorylate other transcription factors. Phosphorylates TP53 on 'Thr-55' which leads to MDM2-mediated degradation of TP53. Phosphorylates GTF2A1 and GTF2F1 on Ser residues. Possesses DNA-binding activity. Exhibits histone acetyltransferase activity towards histones H3 and H4. Essential for progression of the G1 phase of the cell cycle. In Mus musculus (Mouse), this protein is Transcription initiation factor TFIID subunit 1.